Consider the following 317-residue polypeptide: Probable deoxyhypusine synthase 1 (317 aa).

The active-site Nucleophile is lysine 285.

This sequence belongs to the deoxyhypusine synthase family. It depends on NAD(+) as a cofactor.

The enzyme catalyses [eIF5A protein]-L-lysine + spermidine = [eIF5A protein]-deoxyhypusine + propane-1,3-diamine. The protein operates within protein modification; eIF5A hypusination. Its function is as follows. Catalyzes the NAD-dependent oxidative cleavage of spermidine and the subsequent transfer of the butylamine moiety of spermidine to the epsilon-amino group of a specific lysine residue of the eIF-5A precursor protein to form the intermediate deoxyhypusine residue. The chain is Probable deoxyhypusine synthase 1 (dys1) from Methanosarcina mazei (strain ATCC BAA-159 / DSM 3647 / Goe1 / Go1 / JCM 11833 / OCM 88) (Methanosarcina frisia).